Reading from the N-terminus, the 255-residue chain is Ribonuclease PH (255 aa).

Phosphate-binding positions include arginine 86 and glycine 124 to arginine 126.

It belongs to the RNase PH family. As to quaternary structure, homohexameric ring arranged as a trimer of dimers.

It catalyses the reaction tRNA(n+1) + phosphate = tRNA(n) + a ribonucleoside 5'-diphosphate. Functionally, phosphorolytic 3'-5' exoribonuclease that plays an important role in tRNA 3'-end maturation. Removes nucleotide residues following the 3'-CCA terminus of tRNAs; can also add nucleotides to the ends of RNA molecules by using nucleoside diphosphates as substrates, but this may not be physiologically important. Probably plays a role in initiation of 16S rRNA degradation (leading to ribosome degradation) during starvation. The sequence is that of Ribonuclease PH from Aquifex aeolicus (strain VF5).